A 149-amino-acid polypeptide reads, in one-letter code: Protein-export protein SecB (149 aa).

It belongs to the SecB family. As to quaternary structure, homotetramer, a dimer of dimers. One homotetramer interacts with 1 SecA dimer.

It is found in the cytoplasm. In terms of biological role, one of the proteins required for the normal export of preproteins out of the cell cytoplasm. It is a molecular chaperone that binds to a subset of precursor proteins, maintaining them in a translocation-competent state. It also specifically binds to its receptor SecA. This Hydrogenovibrio crunogenus (strain DSM 25203 / XCL-2) (Thiomicrospira crunogena) protein is Protein-export protein SecB.